The chain runs to 294 residues: 4-hydroxy-tetrahydrodipicolinate synthase (294 aa).

Residue Thr-44 coordinates pyruvate. The active-site Proton donor/acceptor is the Tyr-132. Lys-161 serves as the catalytic Schiff-base intermediate with substrate. Ile-206 is a pyruvate binding site.

The protein belongs to the DapA family. As to quaternary structure, homotetramer; dimer of dimers.

It is found in the cytoplasm. It catalyses the reaction L-aspartate 4-semialdehyde + pyruvate = (2S,4S)-4-hydroxy-2,3,4,5-tetrahydrodipicolinate + H2O + H(+). It functions in the pathway amino-acid biosynthesis; L-lysine biosynthesis via DAP pathway; (S)-tetrahydrodipicolinate from L-aspartate: step 3/4. Is not inhibited by (S)-lysine, in contrast to E.coli DapA. Its function is as follows. Catalyzes the condensation of (S)-aspartate-beta-semialdehyde [(S)-ASA] and pyruvate to 4-hydroxy-tetrahydrodipicolinate (HTPA). The protein is 4-hydroxy-tetrahydrodipicolinate synthase of Thermotoga maritima (strain ATCC 43589 / DSM 3109 / JCM 10099 / NBRC 100826 / MSB8).